Here is a 292-residue protein sequence, read N- to C-terminus: MKIRVHATIANFGPGFDVFGVGIGEPYDELSFRESSEWEIRVKGHDVPADVRNTAVVAARALAEMAGEEVALRMKLRKGIRPRSGLGSSGASSLAGALAMARVLGVEDERLILRAAMEGERAASGSAHGDNVVPAYYGDFTILESYEPLRVRRIPVDFDVVAVLPAVEIPTSEARRVLPPKIPLKDAVRNIALASSLVLALKENDLKAVGRLLDDRIALPYRKRLMPWYDRARKAALEAGAYGFSVSGSGPAVFAVGGDVAQIGKAVAEAFEGFGIEVDVYVTKAGRGALWF.

ATP is bound at residue 81–91 (RPRSGLGSSGA).

Belongs to the GHMP kinase family. Homoserine kinase subfamily.

The protein localises to the cytoplasm. The catalysed reaction is L-homoserine + ATP = O-phospho-L-homoserine + ADP + H(+). The protein operates within amino-acid biosynthesis; L-threonine biosynthesis; L-threonine from L-aspartate: step 4/5. Its function is as follows. Catalyzes the ATP-dependent phosphorylation of L-homoserine to L-homoserine phosphate. This is Homoserine kinase from Thermococcus gammatolerans (strain DSM 15229 / JCM 11827 / EJ3).